We begin with the raw amino-acid sequence, 232 residues long: Orotidine 5'-phosphate decarboxylase (232 aa).

Substrate contacts are provided by residues D13, K35, D62–T71, T122, R182, Q191, G211, and R212. K64 functions as the Proton donor in the catalytic mechanism.

This sequence belongs to the OMP decarboxylase family. Type 1 subfamily. As to quaternary structure, homodimer.

The catalysed reaction is orotidine 5'-phosphate + H(+) = UMP + CO2. It participates in pyrimidine metabolism; UMP biosynthesis via de novo pathway; UMP from orotate: step 2/2. Functionally, catalyzes the decarboxylation of orotidine 5'-monophosphate (OMP) to uridine 5'-monophosphate (UMP). This Pseudomonas paraeruginosa (strain DSM 24068 / PA7) (Pseudomonas aeruginosa (strain PA7)) protein is Orotidine 5'-phosphate decarboxylase.